An 893-amino-acid polypeptide reads, in one-letter code: DNA gyrase subunit A (893 aa).

One can recognise a Topo IIA-type catalytic domain in the interval 35–501 (LPDVRDGLKP…GLEDLEDEDL (467 aa)). The O-(5'-phospho-DNA)-tyrosine intermediate role is filled by Y123. Residues 528–534 (QNRGGRG) carry the GyrA-box motif. The tract at residues 810–893 (VNEEDDNEEN…ASDNEEDSDE (84 aa)) is disordered. 2 stretches are compositionally biased toward acidic residues: residues 812-821 (EEDDNEENAD) and 852-862 (DAEMESVESPE). Residues 863-879 (NDDRIDIRQDFMDRVNE) are compositionally biased toward basic and acidic residues. A compositionally biased stretch (acidic residues) spans 880–893 (DIESASDNEEDSDE).

This sequence belongs to the type II topoisomerase GyrA/ParC subunit family. In terms of assembly, heterotetramer, composed of two GyrA and two GyrB chains. In the heterotetramer, GyrA contains the active site tyrosine that forms a transient covalent intermediate with DNA, while GyrB binds cofactors and catalyzes ATP hydrolysis.

It localises to the cytoplasm. It catalyses the reaction ATP-dependent breakage, passage and rejoining of double-stranded DNA.. In terms of biological role, a type II topoisomerase that negatively supercoils closed circular double-stranded (ds) DNA in an ATP-dependent manner to modulate DNA topology and maintain chromosomes in an underwound state. Negative supercoiling favors strand separation, and DNA replication, transcription, recombination and repair, all of which involve strand separation. Also able to catalyze the interconversion of other topological isomers of dsDNA rings, including catenanes and knotted rings. Type II topoisomerases break and join 2 DNA strands simultaneously in an ATP-dependent manner. The polypeptide is DNA gyrase subunit A (Staphylococcus epidermidis (strain ATCC 12228 / FDA PCI 1200)).